We begin with the raw amino-acid sequence, 250 residues long: Developmental protein SEPALLATA 2 (250 aa).

One can recognise an MADS-box domain in the interval 3–57 (RGRVELKRIENKINRQVTFAKRRNGLLKKAYELSVLCDAEVSLIVFSNRGKLYEF). A coiled-coil region spans residues 85–150 (AKELENSYRE…CIKTQYMLDQ (66 aa)). The 91-residue stretch at 88–178 (LENSYREYLK…SMKLEDMIGV (91 aa)) folds into the K-box domain.

Heterodimer with AGAMOUS capable of binding to CArG-box sequences. Interacts with TT16/AGL32.

It is found in the nucleus. Probable transcription factor. Functions with SEPALLATA1/AGL2 and SEPALLATA3/AGL9 to ensure proper development of petals, stamens and carpels and to prevent the indeterminate growth of the flower meristem. Forms a heterodimer via the K-box domain with AG, that could be involved in genes regulation during floral meristem development. The sequence is that of Developmental protein SEPALLATA 2 (SEP2) from Arabidopsis thaliana (Mouse-ear cress).